We begin with the raw amino-acid sequence, 91 residues long: Small ribosomal subunit protein bS20 (91 aa).

It belongs to the bacterial ribosomal protein bS20 family.

Functionally, binds directly to 16S ribosomal RNA. This chain is Small ribosomal subunit protein bS20, found in Caulobacter vibrioides (strain ATCC 19089 / CIP 103742 / CB 15) (Caulobacter crescentus).